The primary structure comprises 782 residues: Endonuclease MutS2 (782 aa).

336–343 (GPNTGGKT) contributes to the ATP binding site. The 76-residue stretch at 707-782 (LDLRGYRYEE…GFGVTVAELK (76 aa)) folds into the Smr domain.

Belongs to the DNA mismatch repair MutS family. MutS2 subfamily. As to quaternary structure, homodimer. Binds to stalled ribosomes, contacting rRNA.

Functionally, endonuclease that is involved in the suppression of homologous recombination and thus may have a key role in the control of bacterial genetic diversity. In terms of biological role, acts as a ribosome collision sensor, splitting the ribosome into its 2 subunits. Detects stalled/collided 70S ribosomes which it binds and splits by an ATP-hydrolysis driven conformational change. Acts upstream of the ribosome quality control system (RQC), a ribosome-associated complex that mediates the extraction of incompletely synthesized nascent chains from stalled ribosomes and their subsequent degradation. Probably generates substrates for RQC. This is Endonuclease MutS2 from Staphylococcus epidermidis (strain ATCC 12228 / FDA PCI 1200).